Consider the following 353-residue polypeptide: A-kinase anchor protein 7 isoforms delta and gamma (353 aa).

Composition is skewed to basic and acidic residues over residues 1-22 and 66-76; these read MERP…RGEE and RSKENRGDRND. Disordered stretches follow at residues 1-33 and 47-85; these read MERP…SPVG and DDCG…KKAK. AMP contacts are provided by residues Thr134 and 224–226; that span reads HLT. CMP contacts are provided by residues Thr134 and 224 to 226; that span reads HLT. The tract at residues 299-353 is PKA-RII-alpha subunit binding domain; sequence AELVRLSKRLVENAVLKAVQQYLEETQNKKQPGEGNSVKAEEGDRNGDGSDNNRK. The tract at residues 300-324 is RI-alpha-binding; it reads ELVRLSKRLVENAVLKAVQQYLEET. The segment at 301–314 is RII-binding; it reads LVRLSKRLVENAVL. The interval 321–353 is disordered; sequence LEETQNKKQPGEGNSVKAEEGDRNGDGSDNNRK. Residues 337–353 show a composition bias toward basic and acidic residues; sequence KAEEGDRNGDGSDNNRK.

Binds cAMP-dependent protein kinase (PKA). Interacts with PRKCA; only the cytoplasmic form is capable of interacting with PRKCA. In terms of tissue distribution, expressed highly in the heart, and moderately in brain, lung, liver, kidney and testis. Hardly detectable in spleen and skeletal muscle. In kidney, isoform Delta is expressed in the principal cells of the IMCD.

The protein localises to the nucleus. It localises to the cytoplasm. Its subcellular location is the cell membrane. Functionally, probably targets cAMP-dependent protein kinase (PKA) to the cellular membrane or cytoskeletal structures. The membrane-associated form reduces epithelial sodium channel (ENaC) activity, whereas the free cytoplasmic form may negatively regulate ENaC channel feedback inhibition by intracellular sodium. Isoform Delta may be involved in shuttling aquaporin-2 (AQP2) to the plasma membrane. The protein is A-kinase anchor protein 7 isoforms delta and gamma of Rattus norvegicus (Rat).